Consider the following 270-residue polypeptide: Centromere protein Q (270 aa).

Residues M1–C59 form a disordered region. Basic residues-rich tracts occupy residues T7–K20 and N39–A48. S52 carries the phosphoserine modification. Residues L143–I205 are a coiled coil.

The protein belongs to the CENP-Q/OKP1 family. Component of the CENPA-CAD complex, composed of CENPI, CENPK, CENPL, CENPO, CENPP, CENPQ, CENPR and CENPS. The CENPA-CAD complex interacts with the CENPA-NAC complex, at least composed of CENPA, CENPC, CENPH, CENPM, CENPN, CENPT and CENPU. In terms of processing, phosphorylation at Ser-52 is essential for CENPE recruitment to kinetochores and orderly chromosome congression.

The protein resides in the nucleus. Its subcellular location is the chromosome. It is found in the centromere. In terms of biological role, component of the CENPA-CAD (nucleosome distal) complex, a complex recruited to centromeres which is involved in assembly of kinetochore proteins, mitotic progression and chromosome segregation. May be involved in incorporation of newly synthesized CENPA into centromeres via its interaction with the CENPA-NAC complex. Plays an important role in chromosome congression and in the recruitment of CENP-O complex (which comprises CENPO, CENPP, CENPQ and CENPU), CENPE and PLK1 to the kinetochores. This Rattus norvegicus (Rat) protein is Centromere protein Q (Cenpq).